The following is a 190-amino-acid chain: dITP/XTP pyrophosphatase (190 aa).

7–12 (THNPNK) lines the substrate pocket. Residues Glu39 and Asp68 each coordinate Mg(2+). The active-site Proton acceptor is Asp68. Substrate is bound by residues Thr69, 148-151 (FGYD), Lys171, and 176-177 (HR).

Belongs to the HAM1 NTPase family. As to quaternary structure, homodimer. Mg(2+) serves as cofactor.

The enzyme catalyses XTP + H2O = XMP + diphosphate + H(+). The catalysed reaction is dITP + H2O = dIMP + diphosphate + H(+). It carries out the reaction ITP + H2O = IMP + diphosphate + H(+). In terms of biological role, pyrophosphatase that catalyzes the hydrolysis of nucleoside triphosphates to their monophosphate derivatives, with a high preference for the non-canonical purine nucleotides XTP (xanthosine triphosphate), dITP (deoxyinosine triphosphate) and ITP. Seems to function as a house-cleaning enzyme that removes non-canonical purine nucleotides from the nucleotide pool, thus preventing their incorporation into DNA/RNA and avoiding chromosomal lesions. This Christiangramia forsetii (strain DSM 17595 / CGMCC 1.15422 / KT0803) (Gramella forsetii) protein is dITP/XTP pyrophosphatase.